Here is a 120-residue protein sequence, read N- to C-terminus: Spermidine export protein MdtJ (120 aa).

The next 4 membrane-spanning stretches (helical) occupy residues 1-21 (MFYWILLALAIATEITGTLSM), 31-51 (AGFILMLVMITLSYIFLSFAV), 54-74 (IALGVAYALWEGIGILFITIF), and 81-101 (EALSTMKIAGLLTLVAGIVLI).

The protein belongs to the drug/metabolite transporter (DMT) superfamily. Small multidrug resistance (SMR) (TC 2.A.7.1) family. MdtJ subfamily. As to quaternary structure, forms a complex with MdtI.

It localises to the cell inner membrane. Functionally, catalyzes the excretion of spermidine. The chain is Spermidine export protein MdtJ from Salmonella choleraesuis (strain SC-B67).